Reading from the N-terminus, the 153-residue chain is Holo-[acyl-carrier-protein] synthase (153 aa).

Aspartate 24 and glutamate 78 together coordinate Mg(2+).

It belongs to the P-Pant transferase superfamily. AcpS family. Requires Mg(2+) as cofactor.

It localises to the cytoplasm. It catalyses the reaction apo-[ACP] + CoA = holo-[ACP] + adenosine 3',5'-bisphosphate + H(+). Its function is as follows. Transfers the 4'-phosphopantetheine moiety from coenzyme A to a Ser of acyl-carrier-protein. The protein is Holo-[acyl-carrier-protein] synthase of Bordetella parapertussis (strain 12822 / ATCC BAA-587 / NCTC 13253).